A 249-amino-acid polypeptide reads, in one-letter code: MTLNINIDNFQGPFDLLLHLIRKNKMDIYDIKIFDITNQYIQYLNEMKEMDLEITSEFIVMAATLIEIKSKYLLPKTKEEEEEKEESDPTKELVSKLVEYKKFKLAADFLKNRELDYGEVFSKKPEIIDDRTEDADNKDILKDITLLDMYKLFEKLMEMYRSRINTNNSLPDKIAPDIYKIEDKMDEISEIIKSNKEIYFSNIINKCSNKIEVVVTFLALLELIKLKDIKVYQSNNFKDIYIERVSAVE.

This sequence belongs to the ScpA family. Component of a cohesin-like complex composed of ScpA, ScpB and the Smc homodimer, in which ScpA and ScpB bind to the head domain of Smc. The presence of the three proteins is required for the association of the complex with DNA.

Its subcellular location is the cytoplasm. Its function is as follows. Participates in chromosomal partition during cell division. May act via the formation of a condensin-like complex containing Smc and ScpB that pull DNA away from mid-cell into both cell halves. The sequence is that of Segregation and condensation protein A from Clostridium acetobutylicum (strain ATCC 824 / DSM 792 / JCM 1419 / IAM 19013 / LMG 5710 / NBRC 13948 / NRRL B-527 / VKM B-1787 / 2291 / W).